Consider the following 576-residue polypeptide: MAGUK p55 subfamily member 7 (576 aa).

2 consecutive L27 domains span residues 10–64 (SEMG…EDCA) and 65–122 (PTPV…YDPE). One can recognise a PDZ domain in the interval 139–220 (IIRLVKNKEP…AITFKVVPGI (82 aa)). One can recognise an SH3 domain in the interval 228–298 (EPKMFIKALF…PSKHFQERRL (71 aa)). The 193-residue stretch at 368-560 (HRLVVLVGPT…AFSELKQALK (193 aa)) folds into the Guanylate kinase-like domain.

Belongs to the MAGUK family.

Its subcellular location is the membrane. It is found in the cell junction. The protein resides in the tight junction. It localises to the adherens junction. Acts as an important adapter that promotes epithelial cell polarity and tight junction formation. Involved in the assembly of protein complexes at sites of cell-cell contact. The protein is MAGUK p55 subfamily member 7 (mpp7) of Danio rerio (Zebrafish).